We begin with the raw amino-acid sequence, 530 residues long: ATP-dependent 6-phosphofructokinase 4, chloroplastic (530 aa).

A chloroplast-targeting transit peptide spans 1–54; sequence MEASISFLGSTKPNISLFNPSSNVLPRRDFPLPALKLKKVSVLPRILHQKRLIR. Position 121 is a phosphoserine (S121). ATP is bound by residues G152, 215-216, and 240-243; these read RG and GGGT. Residues 269-271, 314-316, E370, and 427-430 each bind substrate; these read TID, MGR, and YMIR. The Proton acceptor role is filled by D271.

It belongs to the phosphofructokinase type A (PFKA) family. PPi-dependent PFK group II subfamily. Atypical ATP-dependent clade 'X' sub-subfamily. In terms of assembly, homotetramer. Mg(2+) is required as a cofactor. As to expression, expressed in leaves, stems and flowers.

It localises to the plastid. The protein localises to the chloroplast. The enzyme catalyses beta-D-fructose 6-phosphate + ATP = beta-D-fructose 1,6-bisphosphate + ADP + H(+). The protein operates within carbohydrate degradation; glycolysis; D-glyceraldehyde 3-phosphate and glycerone phosphate from D-glucose: step 3/4. Its activity is regulated as follows. Allosterically activated by AMP. Catalyzes the phosphorylation of D-fructose 6-phosphate to fructose 1,6-bisphosphate by ATP, the first committing step of glycolysis. The polypeptide is ATP-dependent 6-phosphofructokinase 4, chloroplastic (Arabidopsis thaliana (Mouse-ear cress)).